We begin with the raw amino-acid sequence, 426 residues long: Serine--tRNA ligase (426 aa).

The segment at 36-66 (KRKHLQERTQDLQSQRNTISKEIGQKKAKGE) is disordered. Positions 46 to 55 (DLQSQRNTIS) are enriched in polar residues. 233–235 (TAE) contributes to the L-serine binding site. 264–266 (RSE) contributes to the ATP binding site. Glu287 is an L-serine binding site. 351 to 354 (EISS) lines the ATP pocket. Ser387 contributes to the L-serine binding site.

Belongs to the class-II aminoacyl-tRNA synthetase family. Type-1 seryl-tRNA synthetase subfamily. As to quaternary structure, homodimer. The tRNA molecule binds across the dimer.

It is found in the cytoplasm. It catalyses the reaction tRNA(Ser) + L-serine + ATP = L-seryl-tRNA(Ser) + AMP + diphosphate + H(+). The enzyme catalyses tRNA(Sec) + L-serine + ATP = L-seryl-tRNA(Sec) + AMP + diphosphate + H(+). It participates in aminoacyl-tRNA biosynthesis; selenocysteinyl-tRNA(Sec) biosynthesis; L-seryl-tRNA(Sec) from L-serine and tRNA(Sec): step 1/1. Catalyzes the attachment of serine to tRNA(Ser). Is also able to aminoacylate tRNA(Sec) with serine, to form the misacylated tRNA L-seryl-tRNA(Sec), which will be further converted into selenocysteinyl-tRNA(Sec). The chain is Serine--tRNA ligase from Francisella tularensis subsp. tularensis (strain FSC 198).